Reading from the N-terminus, the 586-residue chain is Clathrin heavy chain linker domain-containing protein 1 (586 aa).

The stretch at 174–232 (MNLDALTKYMKHLEDKYAEIKQAMLIKYVPAQRKSDLDEEMIVLLKRRDVAENLNRKLQ) forms a coiled coil.

In Macaca fascicularis (Crab-eating macaque), this protein is Clathrin heavy chain linker domain-containing protein 1 (CLHC1).